A 233-amino-acid chain; its full sequence is uncharacterized protein (233 aa).

The segment at 196 to 212 (FFYEDYLIFDCRAKRRK) is the nascent chain stimulates ribosomal stalling during translation by interfering with the conformation of the peptidyl transferase center (PTC), and the translating mRNA by adopting a difficult-to-decode structure at the ribosome decoding center.

Acts as an endogenous target of the ribosome quality control (RQC) pathway. During translation, the nascent chain has a propensity to stall ribosomes, thereby stimulating activation of the RQC pathway. This is an uncharacterized protein from Saccharomyces cerevisiae (strain ATCC 204508 / S288c) (Baker's yeast).